The chain runs to 418 residues: Cell division protein FtsA (418 aa).

Belongs to the FtsA/MreB family. In terms of assembly, self-interacts. Interacts with FtsZ.

The protein resides in the cell inner membrane. Functionally, cell division protein that is involved in the assembly of the Z ring. May serve as a membrane anchor for the Z ring. The sequence is that of Cell division protein FtsA from Buchnera aphidicola subsp. Acyrthosiphon pisum (strain APS) (Acyrthosiphon pisum symbiotic bacterium).